The following is a 234-amino-acid chain: Phosphoribosylformylglycinamidine synthase subunit PurQ (234 aa).

Residues 4–234 (RIGVVTFPGS…TSILKKLVNA (231 aa)) form the Glutamine amidotransferase type-1 domain. Cys-87 serves as the catalytic Nucleophile. Residues His-204 and Glu-206 contribute to the active site.

Part of the FGAM synthase complex composed of 1 PurL, 1 PurQ and 2 PurS subunits.

Its subcellular location is the cytoplasm. It catalyses the reaction N(2)-formyl-N(1)-(5-phospho-beta-D-ribosyl)glycinamide + L-glutamine + ATP + H2O = 2-formamido-N(1)-(5-O-phospho-beta-D-ribosyl)acetamidine + L-glutamate + ADP + phosphate + H(+). The enzyme catalyses L-glutamine + H2O = L-glutamate + NH4(+). Its pathway is purine metabolism; IMP biosynthesis via de novo pathway; 5-amino-1-(5-phospho-D-ribosyl)imidazole from N(2)-formyl-N(1)-(5-phospho-D-ribosyl)glycinamide: step 1/2. Part of the phosphoribosylformylglycinamidine synthase complex involved in the purines biosynthetic pathway. Catalyzes the ATP-dependent conversion of formylglycinamide ribonucleotide (FGAR) and glutamine to yield formylglycinamidine ribonucleotide (FGAM) and glutamate. The FGAM synthase complex is composed of three subunits. PurQ produces an ammonia molecule by converting glutamine to glutamate. PurL transfers the ammonia molecule to FGAR to form FGAM in an ATP-dependent manner. PurS interacts with PurQ and PurL and is thought to assist in the transfer of the ammonia molecule from PurQ to PurL. In Streptomyces avermitilis (strain ATCC 31267 / DSM 46492 / JCM 5070 / NBRC 14893 / NCIMB 12804 / NRRL 8165 / MA-4680), this protein is Phosphoribosylformylglycinamidine synthase subunit PurQ.